The following is a 403-amino-acid chain: Bifunctional enzyme IspD/IspF (403 aa).

The tract at residues 1-234 is 2-C-methyl-D-erythritol 4-phosphate cytidylyltransferase; sequence MPTSKRTAAI…ARLAAMLGDI (234 aa). The tract at residues 235–403 is 2-C-methyl-D-erythritol 2,4-cyclodiphosphate synthase; that stretch reads RTGTGYDVHA…SDQEDKGWST (169 aa). Residues Asp241 and His243 each coordinate a divalent metal cation. Residues 241–243 and 267–268 contribute to the 4-CDP-2-C-methyl-D-erythritol 2-phosphate site; these read DVH and HS. Residue His275 participates in a divalent metal cation binding. Residues 289–291, 365–368, Phe372, and Arg375 each bind 4-CDP-2-C-methyl-D-erythritol 2-phosphate; these read DIG and TTSE.

The protein in the N-terminal section; belongs to the IspD/TarI cytidylyltransferase family. IspD subfamily. It in the C-terminal section; belongs to the IspF family. Requires a divalent metal cation as cofactor.

It carries out the reaction 2-C-methyl-D-erythritol 4-phosphate + CTP + H(+) = 4-CDP-2-C-methyl-D-erythritol + diphosphate. The catalysed reaction is 4-CDP-2-C-methyl-D-erythritol 2-phosphate = 2-C-methyl-D-erythritol 2,4-cyclic diphosphate + CMP. It functions in the pathway isoprenoid biosynthesis; isopentenyl diphosphate biosynthesis via DXP pathway; isopentenyl diphosphate from 1-deoxy-D-xylulose 5-phosphate: step 2/6. It participates in isoprenoid biosynthesis; isopentenyl diphosphate biosynthesis via DXP pathway; isopentenyl diphosphate from 1-deoxy-D-xylulose 5-phosphate: step 4/6. Bifunctional enzyme that catalyzes the formation of 4-diphosphocytidyl-2-C-methyl-D-erythritol from CTP and 2-C-methyl-D-erythritol 4-phosphate (MEP) (IspD), and catalyzes the conversion of 4-diphosphocytidyl-2-C-methyl-D-erythritol 2-phosphate (CDP-ME2P) to 2-C-methyl-D-erythritol 2,4-cyclodiphosphate (ME-CPP) with a corresponding release of cytidine 5-monophosphate (CMP) (IspF). The sequence is that of Bifunctional enzyme IspD/IspF from Nitrobacter hamburgensis (strain DSM 10229 / NCIMB 13809 / X14).